The chain runs to 245 residues: D-aminoacyl-tRNA deacylase (245 aa).

The protein belongs to the DtdA deacylase family. As to quaternary structure, monomer. It depends on Zn(2+) as a cofactor.

The enzyme catalyses a D-aminoacyl-tRNA + H2O = a tRNA + a D-alpha-amino acid + H(+). It catalyses the reaction glycyl-tRNA(Ala) + H2O = tRNA(Ala) + glycine + H(+). In terms of biological role, D-aminoacyl-tRNA deacylase with broad substrate specificity. By recycling D-aminoacyl-tRNA to D-amino acids and free tRNA molecules, this enzyme counteracts the toxicity associated with the formation of D-aminoacyl-tRNA entities in vivo. This is D-aminoacyl-tRNA deacylase from Ignicoccus hospitalis (strain KIN4/I / DSM 18386 / JCM 14125).